The sequence spans 158 residues: U4/U6.U5 small nuclear ribonucleoprotein 27 kDa protein (158 aa).

Residues 1–102 (MGRSRSRSPE…AEDLEGKTEE (102 aa)) are disordered. Over residues 13 to 59 (RERRRSRSASRERERRRRERSRSRERRRSRSRSPHRRRSRSPRRHRS) the composition is skewed to basic residues. Over residues 66 to 101 (RLKDRRDDDKKEPKESKGGGSKERQLAAEDLEGKTE) the composition is skewed to basic and acidic residues.

This sequence belongs to the SNUT3 family. As to quaternary structure, part of a tri-snRNP complex.

It is found in the nucleus. May play a role in mRNA splicing. The protein is U4/U6.U5 small nuclear ribonucleoprotein 27 kDa protein (snrnp27) of Xenopus laevis (African clawed frog).